The chain runs to 181 residues: dTTP/UTP pyrophosphatase (181 aa).

The active-site Proton acceptor is aspartate 67.

Belongs to the Maf family. YhdE subfamily. A divalent metal cation is required as a cofactor.

The protein resides in the cytoplasm. It catalyses the reaction dTTP + H2O = dTMP + diphosphate + H(+). The catalysed reaction is UTP + H2O = UMP + diphosphate + H(+). In terms of biological role, nucleoside triphosphate pyrophosphatase that hydrolyzes dTTP and UTP. May have a dual role in cell division arrest and in preventing the incorporation of modified nucleotides into cellular nucleic acids. The polypeptide is dTTP/UTP pyrophosphatase (Latilactobacillus sakei subsp. sakei (strain 23K) (Lactobacillus sakei subsp. sakei)).